Here is a 249-residue protein sequence, read N- to C-terminus: Purine nucleoside phosphorylase ML0918 (249 aa).

3 residues coordinate Zn(2+): His72, Cys109, and His126.

This sequence belongs to the purine nucleoside phosphorylase YfiH/LACC1 family. Homodimer. Cu(2+) is required as a cofactor. The cofactor is Zn(2+).

It carries out the reaction adenosine + phosphate = alpha-D-ribose 1-phosphate + adenine. The catalysed reaction is S-methyl-5'-thioadenosine + phosphate = 5-(methylsulfanyl)-alpha-D-ribose 1-phosphate + adenine. The enzyme catalyses inosine + phosphate = alpha-D-ribose 1-phosphate + hypoxanthine. It catalyses the reaction adenosine + H2O + H(+) = inosine + NH4(+). Functionally, purine nucleoside enzyme that catalyzes the phosphorolysis of adenosine and inosine nucleosides, yielding D-ribose 1-phosphate and the respective free bases, adenine and hypoxanthine. Also catalyzes the phosphorolysis of S-methyl-5'-thioadenosine into adenine and S-methyl-5-thio-alpha-D-ribose 1-phosphate. Also has adenosine deaminase activity. The sequence is that of Purine nucleoside phosphorylase ML0918 from Mycobacterium leprae (strain TN).